The following is a 211-amino-acid chain: Uracil phosphoribosyltransferase (211 aa).

Residues Arg78, Arg103, and 130 to 138 each bind 5-phospho-alpha-D-ribose 1-diphosphate; that span reads DPMLATGGT. Residues Ile195 and 200 to 202 contribute to the uracil site; that span reads GDA. 5-phospho-alpha-D-ribose 1-diphosphate is bound at residue Asp201.

The protein belongs to the UPRTase family. It depends on Mg(2+) as a cofactor.

The enzyme catalyses UMP + diphosphate = 5-phospho-alpha-D-ribose 1-diphosphate + uracil. Its pathway is pyrimidine metabolism; UMP biosynthesis via salvage pathway; UMP from uracil: step 1/1. Allosterically activated by GTP. Functionally, catalyzes the conversion of uracil and 5-phospho-alpha-D-ribose 1-diphosphate (PRPP) to UMP and diphosphate. This is Uracil phosphoribosyltransferase from Streptomyces avermitilis (strain ATCC 31267 / DSM 46492 / JCM 5070 / NBRC 14893 / NCIMB 12804 / NRRL 8165 / MA-4680).